The sequence spans 483 residues: Regulatory protein ViaA (483 aa).

The protein belongs to the ViaA family. Homodimer. Interacts with RavA.

It is found in the cytoplasm. Component of the RavA-ViaA chaperone complex, which may act on the membrane to optimize the function of some of the respiratory chains. ViaA stimulates the ATPase activity of RavA. The protein is Regulatory protein ViaA of Salmonella paratyphi A (strain ATCC 9150 / SARB42).